A 231-amino-acid chain; its full sequence is Monothiol glutaredoxin-6 (231 aa).

The signal sequence occupies residues 1 to 29; sequence MIPSNKRNARILSITTLLLLLVFFVAQNA. One can recognise a Glutaredoxin domain in the interval 116 to 219; it reads QKEYSLILDL…ESLQVWSDGK (104 aa). Cys136 provides a ligand contact to [2Fe-2S] cluster.

It belongs to the glutaredoxin family. Monothiol subfamily.

Its subcellular location is the vacuole. This is Monothiol glutaredoxin-6 (GRX6) from Saccharomyces cerevisiae (strain ATCC 204508 / S288c) (Baker's yeast).